Here is a 373-residue protein sequence, read N- to C-terminus: Dual-specificity RNA methyltransferase RlmN (373 aa).

Glu94 (proton acceptor) is an active-site residue. The Radical SAM core domain maps to 100 to 339; that stretch reads EDDRATLCVS…VIVRKTRGDD (240 aa). A disulfide bridge connects residues Cys107 and Cys344. Positions 114, 118, and 121 each coordinate [4Fe-4S] cluster. S-adenosyl-L-methionine contacts are provided by residues 168–169, Ser200, 222–224, and Asn301; these read GE and SIH. Cys344 functions as the S-methylcysteine intermediate in the catalytic mechanism.

It belongs to the radical SAM superfamily. RlmN family. It depends on [4Fe-4S] cluster as a cofactor.

Its subcellular location is the cytoplasm. It catalyses the reaction adenosine(2503) in 23S rRNA + 2 reduced [2Fe-2S]-[ferredoxin] + 2 S-adenosyl-L-methionine = 2-methyladenosine(2503) in 23S rRNA + 5'-deoxyadenosine + L-methionine + 2 oxidized [2Fe-2S]-[ferredoxin] + S-adenosyl-L-homocysteine. The catalysed reaction is adenosine(37) in tRNA + 2 reduced [2Fe-2S]-[ferredoxin] + 2 S-adenosyl-L-methionine = 2-methyladenosine(37) in tRNA + 5'-deoxyadenosine + L-methionine + 2 oxidized [2Fe-2S]-[ferredoxin] + S-adenosyl-L-homocysteine. In terms of biological role, specifically methylates position 2 of adenine 2503 in 23S rRNA and position 2 of adenine 37 in tRNAs. m2A2503 modification seems to play a crucial role in the proofreading step occurring at the peptidyl transferase center and thus would serve to optimize ribosomal fidelity. This is Dual-specificity RNA methyltransferase RlmN from Shewanella sp. (strain W3-18-1).